The primary structure comprises 400 residues: Acetate kinase (400 aa).

Asn7 contacts Mg(2+). Position 14 (Lys14) interacts with ATP. Arg90 lines the substrate pocket. Asp147 functions as the Proton donor/acceptor in the catalytic mechanism. ATP-binding positions include 207 to 211, 282 to 284, and 331 to 335; these read HLGNG, DFR, and GIGEN. Glu384 lines the Mg(2+) pocket.

This sequence belongs to the acetokinase family. As to quaternary structure, homodimer. Mg(2+) is required as a cofactor. The cofactor is Mn(2+).

The protein resides in the cytoplasm. The enzyme catalyses acetate + ATP = acetyl phosphate + ADP. It participates in metabolic intermediate biosynthesis; acetyl-CoA biosynthesis; acetyl-CoA from acetate: step 1/2. Functionally, catalyzes the formation of acetyl phosphate from acetate and ATP. Can also catalyze the reverse reaction. The sequence is that of Acetate kinase from Thermoanaerobacterium thermosaccharolyticum (strain ATCC 7956 / DSM 571 / NCIMB 9385 / NCA 3814 / NCTC 13789 / WDCM 00135 / 2032) (Clostridium thermosaccharolyticum).